Reading from the N-terminus, the 61-residue chain is Metallothionein-1B (61 aa).

A beta region spans residues 1–29; the sequence is MDPNCSCVAGESCTCAGSCKCKQCRCASC. A divalent metal cation-binding residues include C5, C7, C13, C15, C19, C21, C24, C26, C29, C33, C34, C36, C37, C41, C44, C48, C50, C57, C59, and C60. Residues 30 to 61 form an alpha region; it reads KKSCCSCCPVGCAKCAQGCVCKGASDKCSCCA.

It belongs to the metallothionein superfamily. Type 1 family.

Its function is as follows. Metallothioneins have a high content of cysteine residues that bind various heavy metals; these proteins are transcriptionally regulated by both heavy metals and glucocorticoids. In Equus caballus (Horse), this protein is Metallothionein-1B.